Here is a 184-residue protein sequence, read N- to C-terminus: MLDAFSRAVVSADASTSTVSDIAALRAFVASGNRRLDAVNAIASNASCMVSDAVAGMICENQGLIQAGGNCYPNRRMAACLRDAEIVLRYVTYALLAGDASVLDDRCLNGLKETYAALGVPTTSTVRAVQIMKAQAAAHIQDTPSEARAGAKLRKMGTPVVEDRCASLVAEASSYFDRVISALS.

(2R,3E)-phycoerythrobilin is bound by residues Cys-48 and Cys-59. Asn-70 carries the post-translational modification N4-methylasparagine. The (2R,3E)-phycoerythrobilin site is built by Cys-80 and Cys-165.

This sequence belongs to the phycobiliprotein family. In terms of assembly, heterodimer of an alpha and a beta chain. In terms of processing, contains three covalently linked bilin chromophores.

The protein localises to the cellular thylakoid membrane. In terms of biological role, light-harvesting photosynthetic bile pigment-protein from the phycobiliprotein complex. The polypeptide is C-phycoerythrin beta chain (cpeB) (Microchaete diplosiphon (Fremyella diplosiphon)).